The primary structure comprises 341 residues: Probable electron transfer flavoprotein subunit alpha, mitochondrial (341 aa).

FAD is bound at residue 285–313; sequence LYIAVGIDGAIQHLAGIKDSKVIAAINRD.

This sequence belongs to the ETF alpha-subunit/FixB family. As to quaternary structure, heterodimer of an alpha and a beta subunit. Requires FAD as cofactor.

It localises to the mitochondrion matrix. In terms of biological role, the electron transfer flavoprotein serves as a specific electron acceptor for several dehydrogenases, including five acyl-CoA dehydrogenases, glutaryl-CoA and sarcosine dehydrogenase. It transfers the electrons to the main mitochondrial respiratory chain via ETF-ubiquinone oxidoreductase (ETF dehydrogenase). In Schizosaccharomyces pombe (strain 972 / ATCC 24843) (Fission yeast), this protein is Probable electron transfer flavoprotein subunit alpha, mitochondrial.